A 291-amino-acid chain; its full sequence is N-acetylmannosamine kinase (291 aa).

ATP is bound by residues 5–12 (AIDIGGTK) and 132–139 (GVGGGVVS). 4 residues coordinate Zn(2+): His156, Cys166, Cys168, and Cys173.

Belongs to the ROK (NagC/XylR) family. NanK subfamily. Homodimer.

The enzyme catalyses an N-acyl-D-mannosamine + ATP = an N-acyl-D-mannosamine 6-phosphate + ADP + H(+). It functions in the pathway amino-sugar metabolism; N-acetylneuraminate degradation; D-fructose 6-phosphate from N-acetylneuraminate: step 2/5. Catalyzes the phosphorylation of N-acetylmannosamine (ManNAc) to ManNAc-6-P. This is N-acetylmannosamine kinase from Shigella flexneri serotype 5b (strain 8401).